The primary structure comprises 591 residues: Probable LRR receptor-like serine/threonine-protein kinase At1g69990 (591 aa).

A signal peptide spans 1–18; the sequence is MKTISIFFVIILMSSSHA. At 19–218 the chain is on the extracellular side; it reads EDDVLCLKGF…GKNLTIIVTA (200 aa). Asn-46 carries N-linked (GlcNAc...) asparagine glycosylation. 5 LRR repeats span residues 66-88, 90-111, 115-137, 139-162, and 163-185; these read RILS…LKLC, SLQS…QICS, YLVT…IVDC, FLNS…TRLN, and RLQR…LSHY. Residue Asn-211 is glycosylated (N-linked (GlcNAc...) asparagine). A helical transmembrane segment spans residues 219–239; the sequence is GVIGAVGSLCVGFGMFWWFFI. Residues 240–591 are Cytoplasmic-facing; that stretch reads RDRRKMNNYG…LIFNKQEHLK (352 aa). Thr-292 carries the post-translational modification Phosphothreonine. The Protein kinase domain occupies 295 to 573; sequence FDSGNIVVSS…KNLGDQHGFF (279 aa). ATP contacts are provided by residues 301–309 and Lys-323; that span reads VVSSRSGVS. Phosphoserine is present on Ser-378. Thr-389 is subject to Phosphothreonine. Tyr-463 carries the phosphotyrosine modification. Phosphoserine is present on Ser-465. Thr-466 is modified (phosphothreonine). Ser-470 carries the post-translational modification Phosphoserine.

This sequence belongs to the protein kinase superfamily. Ser/Thr protein kinase family.

The protein localises to the membrane. The catalysed reaction is L-seryl-[protein] + ATP = O-phospho-L-seryl-[protein] + ADP + H(+). The enzyme catalyses L-threonyl-[protein] + ATP = O-phospho-L-threonyl-[protein] + ADP + H(+). This Arabidopsis thaliana (Mouse-ear cress) protein is Probable LRR receptor-like serine/threonine-protein kinase At1g69990.